The following is a 1379-amino-acid chain: Increased rDNA silencing protein 4 homolog (1379 aa).

8 disordered regions span residues 1-25, 138-159, 240-314, 337-370, 534-573, 768-816, 1047-1110, and 1168-1208; these read MDAIHPVSLRNSKRHPLLHSERNLS, TSTRKRSLTVPTPRTSFPHHPR, EFDF…PLPS, SQPFKSAEPLSSAIPLPNPMSEKMRNGASKQAIM, ASKRAALSQQTESASKSSSNISEMCDSHPPSNFSISASQQ, TDLH…NDIG, DAPS…KDSQ, and AVHE…DGKY. Residues 250–259 show a composition bias toward basic and acidic residues; sequence PSDKNLEKLK. Residues 262-287 are compositionally biased toward polar residues; that stretch reads ASKQASESQSLKNMESLSLARSSPIL. The span at 541 to 555 shows a compositional bias: low complexity; sequence SQQTESASKSSSNIS. Over residues 562–573 the composition is skewed to polar residues; sequence PPSNFSISASQQ. Over residues 770-780 the composition is skewed to basic residues; sequence LHRKPRRKHKS. Over residues 793–802 the composition is skewed to acidic residues; it reads DESPQSDEVE. An EH domain is found at 1240 to 1329; sequence AANKGYLLSK…DSVWLSSKRM (90 aa). Residues 1273–1308 enclose the EF-hand domain; that stretch reads APTSVLAKIYDLVDRHHTGVLGRDEFIVGMFLIDQY.

This sequence belongs to the IRS4 family.

Positive regulator of phosphatidylinositol 4,5-bisphosphate turnover and negatively regulates signaling through the cell integrity pathway. Involved in rDNA silencing. The protein is Increased rDNA silencing protein 4 homolog of Schizosaccharomyces pombe (strain 972 / ATCC 24843) (Fission yeast).